Reading from the N-terminus, the 71-residue chain is MFLSLPMLTVLIPLVSLAGLFYSASVEDDFPQGCTSTTSLCFYSLLLPITIPVYVFFHLWTWMGIKLFRHN.

Residues 1–3 are Cytoplasmic-facing; the sequence is MFL. Residues 4–26 traverse the membrane as a helical segment; the sequence is SLPMLTVLIPLVSLAGLFYSASV. The Lumenal segment spans residues 27–44; sequence EDDFPQGCTSTTSLCFYS. Residues 45 to 65 traverse the membrane as a helical segment; that stretch reads LLLPITIPVYVFFHLWTWMGI. Residues 66–71 are Cytoplasmic-facing; that stretch reads KLFRHN.

Component of the glycosylphosphatidylinositol-N-acetylglucosaminyltransferase (GPI-GnT) complex composed at least by PIGA, PIGC, PIGH, PIGP, PIGQ, PIGY and DPM2. Interacts directly with PIGA; this interaction regulates glycosylphosphatidylinositol-N-acetylglucosaminyltransferase activity. Does not interact with Ras proteins.

It localises to the endoplasmic reticulum membrane. It participates in glycolipid biosynthesis; glycosylphosphatidylinositol-anchor biosynthesis. In terms of biological role, part of the glycosylphosphatidylinositol-N-acetylglucosaminyltransferase (GPI-GnT) complex that catalyzes the transfer of N-acetylglucosamine from UDP-N-acetylglucosamine to phosphatidylinositol and participates in the first step of GPI biosynthesis. May act by regulating the catalytic subunit PIGA. This is Phosphatidylinositol N-acetylglucosaminyltransferase subunit Y from Bos taurus (Bovine).